The primary structure comprises 321 residues: Citrate synthase (321 aa).

Catalysis depends on residues His248 and Asp306.

Belongs to the citrate synthase family.

The catalysed reaction is oxaloacetate + acetyl-CoA + H2O = citrate + CoA + H(+). Its pathway is carbohydrate metabolism; tricarboxylic acid cycle; isocitrate from oxaloacetate: step 1/2. The polypeptide is Citrate synthase (gltA) (Bartonella bacilliformis).